The primary structure comprises 266 residues: Glucosamine-6-phosphate deaminase (266 aa).

The active-site Proton acceptor; for enolization step is Asp-72. The active-site For ring-opening step is the Asp-141. His-143 (proton acceptor; for ring-opening step) is an active-site residue. Glu-148 (for ring-opening step) is an active-site residue.

This sequence belongs to the glucosamine/galactosamine-6-phosphate isomerase family. NagB subfamily. Homohexamer.

The enzyme catalyses alpha-D-glucosamine 6-phosphate + H2O = beta-D-fructose 6-phosphate + NH4(+). The protein operates within amino-sugar metabolism; N-acetylneuraminate degradation; D-fructose 6-phosphate from N-acetylneuraminate: step 5/5. Its activity is regulated as follows. Allosterically activated by N-acetylglucosamine 6-phosphate (GlcNAc6P). Functionally, catalyzes the reversible isomerization-deamination of glucosamine 6-phosphate (GlcN6P) to form fructose 6-phosphate (Fru6P) and ammonium ion. The polypeptide is Glucosamine-6-phosphate deaminase (Klebsiella pneumoniae subsp. pneumoniae (strain ATCC 700721 / MGH 78578)).